Consider the following 318-residue polypeptide: L-malyl-CoA/beta-methylmalyl-CoA lyase (318 aa).

Positions 19, 24, 30, and 76 each coordinate substrate. 2 residues coordinate Mg(2+): Glu-141 and Asp-168. Substrate-binding positions include 167-168 (AD) and 251-252 (IH).

The protein belongs to the HpcH/HpaI aldolase family. Homohexamer. Dimer of trimers. The cofactor is Mg(2+). Mn(2+) serves as cofactor.

It catalyses the reaction (S)-malyl-CoA = glyoxylate + acetyl-CoA. The enzyme catalyses (2R,3S)-beta-methylmalyl-CoA = propanoyl-CoA + glyoxylate. With respect to regulation, in vitro inhibited by EDTA. Its function is as follows. Involved in the ethylmalonyl-CoA pathway for acetate assimilation. Catalyzes the reversible condensation of glyoxylate and acetyl-CoA to L-malyl-CoA and the reversible condensation of glyoxylate and propionyl-CoA to beta-methylmalyl-CoA. The sequence is that of L-malyl-CoA/beta-methylmalyl-CoA lyase from Rhodobacter capsulatus (Rhodopseudomonas capsulata).